The sequence spans 859 residues: MDMEALKQKIEGLDIPQSLKDELFEKLSKEKDLTEEMVDEIIDEVVNAYRKALVEPYEAVGIVAAQSIGEPGTQMSLPYEEKIIIKEGEFIKPVEIGKLVDEMIERFGFEKIGNSEVCDLPIDIYALSLDQDEKVHWKRIISCIRHKHNGKLIKIKTKSGREITATPYHSFVIRKDNKIIPVKGSELKIGDRIPVVKHIPANCVEAINISDYVSGNYVVDNINNKIAPKINGKSIPNNIKLDYDFGYFIGIYLAEGSVTKYFVSISNVDELILNKIRAFADKLGLNYGEYDNNNGFAESHDIRIYSSTLAEFLSNFGTSSNTKKIAEFVFGANKEFVRGLIRGYFDGDGNVNADRKVIRVTSNSKELIDGIAILLARFNIFSIKTKTKNQFVLIIPHRYAKKFHEEINFSVEKKKSELERLVSSLNDDKTYDSIDMIPSIGDALTKLGEKVDYPKVILKKFERKQKIGRATLQRHLRRIEELAVKKGVNILALKEYWLLKKAVESDVIWDEIVKIEEISCDKKYVYDISVEGLETFTTFDGVLTHNTMRTFHYAGVAEINVTLGLPRMIEIVDARKEPSTPIMTIYLKEEYKDNREKAEEIAKEIESLTLGSIAESISIDLWTQSIKVELDENRLADRGLTIDDVIEAIKKKLKVKIDVDGTTLYLKIKTPSIKALRKRIPKIKNIQLKGIPGIERVLVKKEGGEYVLYTQGSNLREVFKIDGVDTTRTITNNIIEIQEVLGIEAARNAIINEMRNTLEQQGLEVDIRHLMLVADIMTADGEVKPIGRHGVAGEKGSVLARAAFEETVKHLYAAAERGDVDKLKGVIENVIVGKPIYLGTGCVELTIDREYEEGKNMEE.

This sequence belongs to the RNA polymerase beta' chain family. As to quaternary structure, part of the RNA polymerase complex. This protein undergoes a protein self splicing that involves a post-translational excision of the intervening region (intein) followed by peptide ligation.

It localises to the cytoplasm. The enzyme catalyses RNA(n) + a ribonucleoside 5'-triphosphate = RNA(n+1) + diphosphate. Its function is as follows. DNA-dependent RNA polymerase (RNAP) catalyzes the transcription of DNA into RNA using the four ribonucleoside triphosphates as substrates. Forms part of the jaw domain. The polypeptide is DNA-directed RNA polymerase subunit Rpo1C (Methanocaldococcus jannaschii (strain ATCC 43067 / DSM 2661 / JAL-1 / JCM 10045 / NBRC 100440) (Methanococcus jannaschii)).